The chain runs to 106 residues: Nucleoid-associated protein Exig_0019 (106 aa).

The span at Met1 to Lys16 shows a compositional bias: low complexity. The segment at Met1–Lys23 is disordered.

This sequence belongs to the YbaB/EbfC family. In terms of assembly, homodimer.

Its subcellular location is the cytoplasm. The protein resides in the nucleoid. Functionally, binds to DNA and alters its conformation. May be involved in regulation of gene expression, nucleoid organization and DNA protection. The protein is Nucleoid-associated protein Exig_0019 of Exiguobacterium sibiricum (strain DSM 17290 / CCUG 55495 / CIP 109462 / JCM 13490 / 255-15).